Reading from the N-terminus, the 334-residue chain is Ornithine carbamoyltransferase, catabolic (334 aa).

Carbamoyl phosphate contacts are provided by residues 57 to 60 (STRT), Gln-84, Arg-108, and 135 to 138 (HPTQ). L-ornithine contacts are provided by residues Asn-168, Asp-232, and 236 to 237 (SM). Carbamoyl phosphate-binding positions include 274 to 275 (CL) and Arg-321.

The protein belongs to the aspartate/ornithine carbamoyltransferase superfamily. OTCase family.

It localises to the cytoplasm. It carries out the reaction carbamoyl phosphate + L-ornithine = L-citrulline + phosphate + H(+). It functions in the pathway amino-acid degradation; L-arginine degradation via ADI pathway; carbamoyl phosphate from L-arginine: step 2/2. Its function is as follows. Reversibly catalyzes the transfer of the carbamoyl group from carbamoyl phosphate (CP) to the N(epsilon) atom of ornithine (ORN) to produce L-citrulline. The sequence is that of Ornithine carbamoyltransferase, catabolic (arcB) from Haemophilus influenzae (strain ATCC 51907 / DSM 11121 / KW20 / Rd).